A 169-amino-acid polypeptide reads, in one-letter code: Cell division inhibitor SulA (169 aa).

The segment covering 1–15 has biased composition (polar residues); sequence MFTSAHANRSAQASA. The segment at 1-22 is disordered; that stretch reads MFTSAHANRSAQASASAGHYAH. The ftsZ binding stretch occupies residues 106–112; sequence ALRTGNY. The interval 162-169 is lon protease binding; that stretch reads KIHSNLYH.

This sequence belongs to the SulA family. Interacts with FtsZ. In terms of processing, is rapidly cleaved and degraded by the Lon protease once DNA damage is repaired.

In terms of biological role, component of the SOS system and an inhibitor of cell division. Accumulation of SulA causes rapid cessation of cell division and the appearance of long, non-septate filaments. In the presence of GTP, binds a polymerization-competent form of FtsZ in a 1:1 ratio, thus inhibiting FtsZ polymerization and therefore preventing it from participating in the assembly of the Z ring. This mechanism prevents the premature segregation of damaged DNA to daughter cells during cell division. In Klebsiella pneumoniae (strain 342), this protein is Cell division inhibitor SulA.